A 98-amino-acid polypeptide reads, in one-letter code: NADH-ubiquinone oxidoreductase chain 4L (98 aa).

3 helical membrane-spanning segments follow: residues 1 to 21 (MASI…GVLI), 28 to 48 (STLL…TLLI), and 61 to 81 (LILL…LVTI).

It belongs to the complex I subunit 4L family. As to quaternary structure, core subunit of respiratory chain NADH dehydrogenase (Complex I) which is composed of 45 different subunits.

The protein localises to the mitochondrion inner membrane. It catalyses the reaction a ubiquinone + NADH + 5 H(+)(in) = a ubiquinol + NAD(+) + 4 H(+)(out). Its function is as follows. Core subunit of the mitochondrial membrane respiratory chain NADH dehydrogenase (Complex I) which catalyzes electron transfer from NADH through the respiratory chain, using ubiquinone as an electron acceptor. Part of the enzyme membrane arm which is embedded in the lipid bilayer and involved in proton translocation. The protein is NADH-ubiquinone oxidoreductase chain 4L (MT-ND4L) of Thylamys elegans (Elegant fat-tailed mouse opossum).